A 294-amino-acid polypeptide reads, in one-letter code: NADH-cytochrome b5 reductase 1 (294 aa).

The helical transmembrane segment at 18–38 threads the bilayer; sequence PFIVFATVATIISAFIGYYFL. One can recognise an FAD-binding FR-type domain in the interval 51–154; sequence DEFQKFPLIE…RGPKGFFTYT (104 aa). FAD contacts are provided by residues 134-149 and 160-192; these read AGKNVGEHIEIRGPKG and SFGMIAGGTGIAPMYQIITAILKNPEDKTKIHL.

The protein belongs to the flavoprotein pyridine nucleotide cytochrome reductase family. In terms of assembly, monomer. Component of the 2-(3-amino-3-carboxypropyl)histidine synthase complex composed of DPH1, DPH2, DPH3 and a NADH-dependent reductase, predominantly CBR1. FAD serves as cofactor.

It localises to the mitochondrion outer membrane. The catalysed reaction is 2 Fe(III)-[cytochrome b5] + NADH = 2 Fe(II)-[cytochrome b5] + NAD(+) + H(+). The enzyme catalyses 2 Fe(3+)-[Dph3] + NADH = 2 Fe(2+)-[Dph3] + NAD(+) + H(+). Its pathway is protein modification; peptidyl-diphthamide biosynthesis. NADH-dependent reductase for DPH3 and cytochrome b5. Required for the first step of diphthamide biosynthesis, a post-translational modification of histidine which occurs in elongation factor 2. DPH1 and DPH2 transfer a 3-amino-3-carboxypropyl (ACP) group from S-adenosyl-L-methionine (SAM) to a histidine residue, the reaction is assisted by a reduction system comprising DPH3 and a NADH-dependent reductase, predominantly CBR1. By reducing DPH3, also involved in the formation of the tRNA wobble base modification mcm5s 2U (5-methoxycarbonylmethyl-2-thiouridine), mediated by the elongator complex. The cytochrome b5/NADH cytochrome b5 reductase electron transfer system supports the catalytic activity of several sterol biosynthetic enzymes. The sequence is that of NADH-cytochrome b5 reductase 1 (CBR1) from Candida albicans (strain SC5314 / ATCC MYA-2876) (Yeast).